A 76-amino-acid chain; its full sequence is Small ribosomal subunit protein eS17 (76 aa).

This sequence belongs to the eukaryotic ribosomal protein eS17 family.

This Picrophilus torridus (strain ATCC 700027 / DSM 9790 / JCM 10055 / NBRC 100828 / KAW 2/3) protein is Small ribosomal subunit protein eS17.